A 246-amino-acid polypeptide reads, in one-letter code: Ubiquinone biosynthesis O-methyltransferase (246 aa).

4 residues coordinate S-adenosyl-L-methionine: Arg36, Gly60, Asp81, and Leu123.

This sequence belongs to the methyltransferase superfamily. UbiG/COQ3 family.

It carries out the reaction a 3-demethylubiquinol + S-adenosyl-L-methionine = a ubiquinol + S-adenosyl-L-homocysteine + H(+). The catalysed reaction is a 3-(all-trans-polyprenyl)benzene-1,2-diol + S-adenosyl-L-methionine = a 2-methoxy-6-(all-trans-polyprenyl)phenol + S-adenosyl-L-homocysteine + H(+). Its pathway is cofactor biosynthesis; ubiquinone biosynthesis. In terms of biological role, O-methyltransferase that catalyzes the 2 O-methylation steps in the ubiquinone biosynthetic pathway. The polypeptide is Ubiquinone biosynthesis O-methyltransferase (Rickettsia typhi (strain ATCC VR-144 / Wilmington)).